The sequence spans 320 residues: Acyl-coenzyme A thioesterase 8 (320 aa).

Catalysis depends on charge relay system residues Asp-233, Ser-255, and Gln-305. Positions 318 to 320 (SKL) match the Microbody targeting signal motif.

Belongs to the C/M/P thioester hydrolase family. As to quaternary structure, homodimer. Ubiquitous.

The protein resides in the peroxisome matrix. It carries out the reaction choloyl-CoA + H2O = cholate + CoA + H(+). It catalyses the reaction chenodeoxycholoyl-CoA + H2O = chenodeoxycholate + CoA + H(+). The catalysed reaction is acetyl-CoA + H2O = acetate + CoA + H(+). The enzyme catalyses malonyl-CoA + H2O = malonate + CoA + H(+). It carries out the reaction acetoacetyl-CoA + H2O = acetoacetate + CoA + H(+). It catalyses the reaction propanoyl-CoA + H2O = propanoate + CoA + H(+). The catalysed reaction is butanoyl-CoA + H2O = butanoate + CoA + H(+). The enzyme catalyses succinyl-CoA + H2O = succinate + CoA + H(+). It carries out the reaction glutaryl-CoA + H2O = glutarate + CoA + H(+). It catalyses the reaction hexanoyl-CoA + H2O = hexanoate + CoA + H(+). The catalysed reaction is hexanedioyl-CoA + H2O = hexanedioate + CoA + H(+). The enzyme catalyses octanoyl-CoA + H2O = octanoate + CoA + H(+). It carries out the reaction octanedioyl-CoA + H2O = octanedioate + CoA + H(+). It catalyses the reaction decanoyl-CoA + H2O = decanoate + CoA + H(+). The catalysed reaction is decanedioyl-CoA + H2O = decanedioate + CoA + H(+). The enzyme catalyses dodecanoyl-CoA + H2O = dodecanoate + CoA + H(+). It carries out the reaction dodecanedioyl-CoA + H2O = dodecanedioate + CoA + H(+). It catalyses the reaction tetradecanoyl-CoA + H2O = tetradecanoate + CoA + H(+). The catalysed reaction is (9Z)-tetradecenoyl-CoA + H2O = (9Z)-tetradecenoate + CoA + H(+). The enzyme catalyses hexadecanoyl-CoA + H2O = hexadecanoate + CoA + H(+). It carries out the reaction (9Z)-hexadecenoyl-CoA + H2O = (9Z)-hexadecenoate + CoA + H(+). It catalyses the reaction octadecanoyl-CoA + H2O = octadecanoate + CoA + H(+). The catalysed reaction is (9Z)-octadecenoyl-CoA + H2O = (9Z)-octadecenoate + CoA + H(+). The enzyme catalyses (9Z,12Z)-octadecadienoyl-CoA + H2O = (9Z,12Z)-octadecadienoate + CoA + H(+). It carries out the reaction eicosanoyl-CoA + H2O = eicosanoate + CoA + H(+). It catalyses the reaction (5Z,8Z,11Z,14Z)-eicosatetraenoyl-CoA + H2O = (5Z,8Z,11Z,14Z)-eicosatetraenoate + CoA + H(+). The catalysed reaction is 4,8-dimethylnonanoyl-CoA + H2O = 4,8-dimethylnonanoate + CoA + H(+). The enzyme catalyses 2,6-dimethylheptanoyl-CoA + H2O = 2,6-dimethylheptanoate + CoA + H(+). It carries out the reaction (3S)-3-hydroxy-3-methylglutaryl-CoA + H2O = 3-hydroxy-3-methylglutarate + CoA + H(+). It catalyses the reaction 3alpha,7alpha,12alpha-trihydroxy-5beta-cholestan-26-oyl-CoA + H2O = 3alpha,7alpha,12alpha-trihydroxy-5beta-cholestan-26-oate + CoA + H(+). The catalysed reaction is 2-methyloctadecanoyl-CoA + H2O = 2-methyloctadecanoate + CoA + H(+). The enzyme catalyses prostaglandin F2alpha-CoA + H2O = prostaglandin F2alpha + CoA + H(+). The protein operates within lipid metabolism; fatty acid metabolism. Its activity is regulated as follows. Inhibited by CoASH (IC(50)=10-15 uM). Also inhibited by cysteine-reactive agents. In terms of biological role, catalyzes the hydrolysis of acyl-CoAs into free fatty acids and coenzyme A (CoASH), regulating their respective intracellular levels. Displays no strong substrate specificity with respect to the carboxylic acid moiety of Acyl-CoAs. Hydrolyzes medium length (C2 to C20) straight-chain, saturated and unsaturated acyl-CoAS but is inactive towards substrates with longer aliphatic chains. Moreover, it catalyzes the hydrolysis of CoA esters of bile acids, such as choloyl-CoA and chenodeoxycholoyl-CoA and competes with bile acid CoA:amino acid N-acyltransferase (BAAT). Is also able to hydrolyze CoA esters of dicarboxylic acids. It is involved in the metabolic regulation of peroxisome proliferation. The protein is Acyl-coenzyme A thioesterase 8 (Acot8) of Mus musculus (Mouse).